The primary structure comprises 259 residues: MSKREDGRLDHELRPVIITRGFTENPAGSVLIEFGHTKVLCTASVTEGVPRWRKATGLGWLTAEYAMLPSATHSRSDRESVRGRLSGRTQEISRLISRSLRACIDLAALGENTIAIDCDVLQADGGTRTAAITGAYVALADAVTYLSAAGKLSDPRPLSCAIAAVSVGVVDGRIRVDLPYEEDSRAEVDMNVVATDTGTLVEIQGTGEGATFARSTLDKLLDMALGACDTLFAAQRDALALPYPGVLPQGPPPPKAFGT.

Residues R88 and 126–128 (GTR) contribute to the phosphate site.

The protein belongs to the RNase PH family. Homohexameric ring arranged as a trimer of dimers.

It carries out the reaction tRNA(n+1) + phosphate = tRNA(n) + a ribonucleoside 5'-diphosphate. Phosphorolytic 3'-5' exoribonuclease that plays an important role in tRNA 3'-end maturation. Removes nucleotide residues following the 3'-CCA terminus of tRNAs; can also add nucleotides to the ends of RNA molecules by using nucleoside diphosphates as substrates, but this may not be physiologically important. Probably plays a role in initiation of 16S rRNA degradation (leading to ribosome degradation) during starvation. This is Ribonuclease PH from Mycobacterium bovis (strain ATCC BAA-935 / AF2122/97).